The sequence spans 226 residues: NADH-quinone oxidoreductase subunit C (226 aa).

The disordered stretch occupies residues 1 to 21 (MTEPTGDQTPEIIGVRRGMFG).

It belongs to the complex I 30 kDa subunit family. NDH-1 is composed of 14 different subunits. Subunits NuoB, C, D, E, F, and G constitute the peripheral sector of the complex.

The protein localises to the cell membrane. It carries out the reaction a quinone + NADH + 5 H(+)(in) = a quinol + NAD(+) + 4 H(+)(out). NDH-1 shuttles electrons from NADH, via FMN and iron-sulfur (Fe-S) centers, to quinones in the respiratory chain. The immediate electron acceptor for the enzyme in this species is believed to be a menaquinone. Couples the redox reaction to proton translocation (for every two electrons transferred, four hydrogen ions are translocated across the cytoplasmic membrane), and thus conserves the redox energy in a proton gradient. This chain is NADH-quinone oxidoreductase subunit C, found in Mycolicibacterium gilvum (strain PYR-GCK) (Mycobacterium gilvum (strain PYR-GCK)).